The sequence spans 820 residues: 1,4-alpha-glucan-branching enzyme, chloroplastic/amyloplastic (820 aa).

Positions 1-20 are enriched in low complexity; the sequence is MLCLTSSSSSAPAPLLPSLA. The interval 1–28 is disordered; it reads MLCLTSSSSSAPAPLLPSLADRPSPGIA. Residues 1–64 constitute a chloroplast transit peptide; sequence MLCLTSSSSS…SVPATARKNK (64 aa). Residues tryptophan 153 and lysine 188 each coordinate (1,4-alpha-D-glucosyl)n. The active-site Nucleophile is aspartate 409. Glutamate 464 serves as the catalytic Proton donor.

This sequence belongs to the glycosyl hydrolase 13 family. GlgB subfamily. Monomer.

It localises to the plastid. The protein resides in the chloroplast. Its subcellular location is the amyloplast. It catalyses the reaction Transfers a segment of a (1-&gt;4)-alpha-D-glucan chain to a primary hydroxy group in a similar glucan chain.. The protein operates within glycan biosynthesis; starch biosynthesis. Functionally, catalyzes the formation of the alpha-1,6-glucosidic linkages in starch by scission of a 1,4-alpha-linked oligosaccharide from growing alpha-1,4-glucan chains and the subsequent attachment of the oligosaccharide to the alpha-1,6 position. The chain is 1,4-alpha-glucan-branching enzyme, chloroplastic/amyloplastic (SBE1) from Oryza sativa subsp. japonica (Rice).